The sequence spans 723 residues: Probable C-mannosyltransferase DPY19L4 (723 aa).

A disordered region spans residues 1-33; the sequence is MAEEEGPPVELRQRKKPKSSENKESAKEEKISD. An N-acetylalanine modification is found at Ala-2. A compositionally biased stretch (basic and acidic residues) spans 18–32; the sequence is KSSENKESAKEEKIS. 12 helical membrane passes run 52–72, 161–178, 184–202, 222–240, 260–280, 292–310, 316–337, 349–370, 421–441, 466–486, 489–509, and 522–542; these read IFIG…YLSA, VYFY…YVTA, WLMS…WFVI, LPYF…KSNL, MMMW…LFLL, YEVY…LLQF, LVSP…QLNV, VINF…KMFV, LLPF…QVIF, IIYH…IEGL, IWIP…ELWM, and PILL…LSLW.

It belongs to the dpy-19 family. As to expression, widely expressed.

It is found in the membrane. Probable C-mannosyltransferase that mediates C-mannosylation of tryptophan residues on target proteins. The sequence is that of Probable C-mannosyltransferase DPY19L4 (DPY19L4) from Homo sapiens (Human).